A 265-amino-acid polypeptide reads, in one-letter code: Adenosine 5'-phosphosulfate reductase (265 aa).

Cys135, Cys136, Cys218, and Cys221 together coordinate [4Fe-4S] cluster. The Nucleophile; cysteine thiosulfonate intermediate role is filled by Cys246.

It belongs to the PAPS reductase family. CysH subfamily. Requires [4Fe-4S] cluster as cofactor.

The protein resides in the cytoplasm. The catalysed reaction is [thioredoxin]-disulfide + sulfite + AMP + 2 H(+) = adenosine 5'-phosphosulfate + [thioredoxin]-dithiol. It participates in sulfur metabolism; hydrogen sulfide biosynthesis; sulfite from sulfate. Functionally, catalyzes the formation of sulfite from adenosine 5'-phosphosulfate (APS) using thioredoxin as an electron donor. This chain is Adenosine 5'-phosphosulfate reductase, found in Rhizobium meliloti (strain 1021) (Ensifer meliloti).